The sequence spans 223 residues: RNA polymerase sigma-H factor (223 aa).

The short motif at 67–80 (DIVQEGMIGLYKSI) is the Polymerase core binding element. The H-T-H motif DNA-binding region spans 187–206 (YQEISEELNRHVKSIDNALQ).

It belongs to the sigma-70 factor family.

Sigma factors are initiation factors that promote the attachment of RNA polymerase to specific initiation sites and are then released. This sigma factor is involved in the transition to post-exponential phase in the beginning of sporulation. This Bacillus licheniformis protein is RNA polymerase sigma-H factor (sigH).